Consider the following 174-residue polypeptide: Shikimate kinase (174 aa).

14–19 (GAGKST) lines the ATP pocket. S18 lines the Mg(2+) pocket. Substrate is bound by residues D36, R60, and G82. An ATP-binding site is contributed by R120. Substrate is bound at residue R139. Q156 contacts ATP.

The protein belongs to the shikimate kinase family. As to quaternary structure, monomer. Requires Mg(2+) as cofactor.

It is found in the cytoplasm. The enzyme catalyses shikimate + ATP = 3-phosphoshikimate + ADP + H(+). Its pathway is metabolic intermediate biosynthesis; chorismate biosynthesis; chorismate from D-erythrose 4-phosphate and phosphoenolpyruvate: step 5/7. Catalyzes the specific phosphorylation of the 3-hydroxyl group of shikimic acid using ATP as a cosubstrate. This is Shikimate kinase from Vibrio cholerae serotype O1 (strain ATCC 39541 / Classical Ogawa 395 / O395).